The sequence spans 131 residues: Profilin (131 aa).

This sequence belongs to the profilin family. Occurs in many kinds of cells as a complex with monomeric actin in a 1:1 ratio.

It localises to the cytoplasm. The protein resides in the cytoskeleton. In terms of biological role, binds to actin and affects the structure of the cytoskeleton. At high concentrations, profilin prevents the polymerization of actin, whereas it enhances it at low concentrations. By binding to PIP2, it inhibits the formation of IP3 and DG. This Prunus avium (Cherry) protein is Profilin.